Consider the following 352-residue polypeptide: Phenylalanine--tRNA ligase alpha subunit (352 aa).

Glutamate 258 is a Mg(2+) binding site.

Belongs to the class-II aminoacyl-tRNA synthetase family. Phe-tRNA synthetase alpha subunit type 1 subfamily. Tetramer of two alpha and two beta subunits. Requires Mg(2+) as cofactor.

The protein resides in the cytoplasm. The catalysed reaction is tRNA(Phe) + L-phenylalanine + ATP = L-phenylalanyl-tRNA(Phe) + AMP + diphosphate + H(+). This chain is Phenylalanine--tRNA ligase alpha subunit, found in Staphylococcus haemolyticus (strain JCSC1435).